The sequence spans 260 residues: Indole-3-glycerol phosphate synthase (260 aa).

It belongs to the TrpC family.

It carries out the reaction 1-(2-carboxyphenylamino)-1-deoxy-D-ribulose 5-phosphate + H(+) = (1S,2R)-1-C-(indol-3-yl)glycerol 3-phosphate + CO2 + H2O. It participates in amino-acid biosynthesis; L-tryptophan biosynthesis; L-tryptophan from chorismate: step 4/5. This chain is Indole-3-glycerol phosphate synthase, found in Acetivibrio thermocellus (strain ATCC 27405 / DSM 1237 / JCM 9322 / NBRC 103400 / NCIMB 10682 / NRRL B-4536 / VPI 7372) (Clostridium thermocellum).